A 34-amino-acid polypeptide reads, in one-letter code: Leader peptide SpeFL (34 aa).

The interval 1–13 (MENNSRTMPHIRR) is sensor domain. The Ornithine recognition loop motif lies at 10 to 16 (HIRRTTH). Arg13 is a binding site for L-ornithine. The segment at 14 to 34 (TTHIMKFAHRNSFDFHFFNAR) is effector domain.

Belongs to the speF operon leader peptide family. As to quaternary structure, binds ornithine in stalled 70S ribosomes, blocking the upper two-thirds of the exit tunnel. Contacts 23S rRNA and ribosomal proteins L4 and L22.

In terms of biological role, a small protein (arrest peptide) encoded upstream of inducible ornithine carboxylase gene (speF) that controls expression of downstream genes (speF and patE) by nascent chain-translational arrest and transcriptional attenuation. In the presence of ornithine a toeprint due to ribosomal arrest can be seen on the speFL transcript. Only L-ornithine (not other tested amino acids) has this effect. It is thought that in the presence of ornithine, ribosomal stalling on speFL prevents binding of Rho transcription termination factor to a downstream rut site allowing transcription of the operon. In the absence of ornithine, ribosomes terminate translation and are recycled, exposing the rut site allowing Rho to bind and prematurely terminate transcription. The presence of a pair of rare Arg codons could slow down translation to prevent polysome accumulation and to expose the rut site to Rho. The polypeptide is Leader peptide SpeFL (Escherichia coli (strain K12)).